A 232-amino-acid polypeptide reads, in one-letter code: Lipoprotein-releasing system ATP-binding protein LolD (232 aa).

In terms of domain architecture, ABC transporter spans 11–231 (VYLHDIKREY…SLENGHVVEL (221 aa)). 47 to 54 (APSGSGKS) lines the ATP pocket.

The protein belongs to the ABC transporter superfamily. Lipoprotein translocase (TC 3.A.1.125) family. As to quaternary structure, the complex is composed of two ATP-binding proteins (LolD) and two transmembrane proteins (LolC and LolE).

It localises to the cell inner membrane. In terms of biological role, part of the ABC transporter complex LolCDE involved in the translocation of mature outer membrane-directed lipoproteins, from the inner membrane to the periplasmic chaperone, LolA. Responsible for the formation of the LolA-lipoprotein complex in an ATP-dependent manner. This Nitrobacter winogradskyi (strain ATCC 25391 / DSM 10237 / CIP 104748 / NCIMB 11846 / Nb-255) protein is Lipoprotein-releasing system ATP-binding protein LolD.